A 239-amino-acid chain; its full sequence is Phosphoribosylaminoimidazole-succinocarboxamide synthase (239 aa).

Belongs to the SAICAR synthetase family.

The catalysed reaction is 5-amino-1-(5-phospho-D-ribosyl)imidazole-4-carboxylate + L-aspartate + ATP = (2S)-2-[5-amino-1-(5-phospho-beta-D-ribosyl)imidazole-4-carboxamido]succinate + ADP + phosphate + 2 H(+). The protein operates within purine metabolism; IMP biosynthesis via de novo pathway; 5-amino-1-(5-phospho-D-ribosyl)imidazole-4-carboxamide from 5-amino-1-(5-phospho-D-ribosyl)imidazole-4-carboxylate: step 1/2. This is Phosphoribosylaminoimidazole-succinocarboxamide synthase from Acinetobacter baylyi (strain ATCC 33305 / BD413 / ADP1).